Consider the following 88-residue polypeptide: Small ribosomal subunit protein uS15 (88 aa).

Belongs to the universal ribosomal protein uS15 family. In terms of assembly, part of the 30S ribosomal subunit. Forms a bridge to the 50S subunit in the 70S ribosome, contacting the 23S rRNA.

Functionally, one of the primary rRNA binding proteins, it binds directly to 16S rRNA where it helps nucleate assembly of the platform of the 30S subunit by binding and bridging several RNA helices of the 16S rRNA. Its function is as follows. Forms an intersubunit bridge (bridge B4) with the 23S rRNA of the 50S subunit in the ribosome. The sequence is that of Small ribosomal subunit protein uS15 from Leptospira biflexa serovar Patoc (strain Patoc 1 / Ames).